Reading from the N-terminus, the 1550-residue chain is Cellulose synthase 1 (1550 aa).

The catalytic stretch occupies residues 1 to 741 (MPEVRSSTQS…KERVLKGTVK (741 aa)). The next 3 membrane-spanning stretches (helical) occupy residues 26 to 46 (GAGL…TSVT), 47 to 67 (LPPE…FIVG), and 106 to 126 (GLLG…LFLS). The interval 147–240 (EWPTVDIFVP…YILIFDCDHV (94 aa)) is catalytic subdomain A. Residue D189 is part of the active site. Substrate is bound by residues D236 and D238. Residues 317-377 (TAIEQIGGFA…GQRVRWARGM (61 aa)) form a catalytic subdomain B region. D333 is a catalytic residue. Transmembrane regions (helical) follow at residues 398 to 418 (LCYL…IFLS), 423 to 443 (FLFF…AYAI), 468 to 488 (VYET…LLSP), 507 to 527 (FDLG…GGLA), and 547 to 567 (LLNS…IAVG). Positions 572–647 (QKRNSHRIPA…PARIIRAGNG (76 aa)) constitute a PilZ domain. 2 disordered regions span residues 708–731 (VHRS…NPSR) and 768–813 (APAH…QPLA). The interval 742 to 1550 (MVSLLALLTF…KQLEDERRKS (809 aa)) is cyclic di-GMP binding domain. A compositionally biased stretch (low complexity) spans 768–796 (APAHQPEASDLPPLPALLPATSGAAQAGS). Residues 1513 to 1533 (VLLVGLLGCILIVSVLARALA) form a helical membrane-spanning segment.

The protein in the N-terminal section; belongs to the glycosyltransferase 2 family. It in the C-terminal section; belongs to the AcsB/BcsB family. Requires Mg(2+) as cofactor.

The protein localises to the cell inner membrane. The enzyme catalyses [(1-&gt;4)-beta-D-glucosyl](n) + UDP-alpha-D-glucose = [(1-&gt;4)-beta-D-glucosyl](n+1) + UDP + H(+). Its pathway is glycan metabolism; bacterial cellulose biosynthesis. Functionally, bifunctional protein comprised of a catalytic subunit and a regulatory subunit. The catalytic subunit of cellulose synthase polymerizes uridine 5'-diphosphate glucose to cellulose in a processive way. The thick cellulosic mats generated by this enzyme probably provide a specialized protective environment to the bacterium. The regulatory subunit binds bis-(3'-5') cyclic diguanylic acid (c-di-GMP). The protein is Cellulose synthase 1 (acsAB) of Novacetimonas hansenii (Komagataeibacter hansenii).